The primary structure comprises 223 residues: Ubiquitin-conjugating enzyme E2 S-A (223 aa).

A UBC core domain is found at histidine 11–glycine 157. The Glycyl thioester intermediate role is filled by cysteine 95. A disordered region spans residues glutamine 170–leucine 223. Over residues alanine 209–leucine 223 the composition is skewed to basic residues.

It belongs to the ubiquitin-conjugating enzyme family.

The enzyme catalyses S-ubiquitinyl-[E1 ubiquitin-activating enzyme]-L-cysteine + [E2 ubiquitin-conjugating enzyme]-L-cysteine = [E1 ubiquitin-activating enzyme]-L-cysteine + S-ubiquitinyl-[E2 ubiquitin-conjugating enzyme]-L-cysteine.. It functions in the pathway protein modification; protein ubiquitination. Its function is as follows. Catalyzes the covalent attachment of ubiquitin to other proteins. Acts as an essential factor of the anaphase promoting complex/cyclosome (APC/C), a cell cycle-regulated ubiquitin ligase that controls progression through mitosis. Acts by specifically elongating 'Lys-11'-linked polyubiquitin chains initiated by the E2 enzyme ube2c/ubch10 on APC/C substrates, enhancing the degradation of APC/C substrates by the proteasome and promoting mitotic exit. The sequence is that of Ubiquitin-conjugating enzyme E2 S-A (ube2s-a) from Xenopus laevis (African clawed frog).